A 400-amino-acid chain; its full sequence is WW domain-containing transcription regulator protein 1 (400 aa).

K46 is covalently cross-linked (Glycyl lysine isopeptide (Lys-Gly) (interchain with G-Cter in ubiquitin)). Residues 52 to 117 (FFKEPDSGSH…QQHAHLRQQS (66 aa)) form a disordered region. Polar residues predominate over residues 61 to 70 (HSRQSSTDSS). S62 and S89 each carry phosphoserine. Residues 91 to 110 (PASLQLGPGAGAAGSPAQQH) show a composition bias toward low complexity. One can recognise a WW domain in the interval 124–157 (LPLPPGWEMTFTATGQRYFLNHIEKITTWQDPRK). The span at 192–211 (NHQHQQQMAPTNLSQQNHPT) shows a compositional bias: polar residues. The disordered stretch occupies residues 192 to 216 (NHQHQQQMAPTNLSQQNHPTQNPPA). Positions 222-400 (PNALTTQQQQ…NKSEPFLTWL (179 aa)) are required for interaction with PALS1. S295 and S311 each carry phosphoserine. The PDZ-binding motif lies at 394-400 (EPFLTWL).

As to quaternary structure, binds to SLC9A3R2 via the PDZ motif at the plasma membrane. Binds to YWHAZ in vivo and in vitro through the phosphoserine-binding motif RSHSSP. Interacts (via coiled-coil domain) with SMAD2 (via MH1 domain), SMAD3 and SMAD4. Interacts with MED15. Interacts with PAX8 and NKX2-1. Interacts with TEAD1, TEAD2, TEAD3 and TEAD4. Interacts (via WW domain) with PALS1. Interacts with LATS1. Interacts with YAP1 (when phosphorylated at 'Ser-112'). Interacts (via WW domain) with PRRG4 (via cytoplasmic domain). Interacts (via WW domain) with AMOTL2 (via PPXY motif); the interaction promotes WWTR1/TAZ localization to the cytoplasm and tight junctions, thereby inhibiting its transcriptional coactivator properties. Interacts (via WW domain) with AMOT; the interaction facilitates translocation of WWTR1/TAZ to the cytoplasm. In terms of processing, phosphorylated by LATS2 and STK3/MST2. Phosphorylation by LATS2 results in creation of 14-3-3 binding sites, retention in the cytoplasm, and functional inactivation. Phosphorylation results in the inhibition of transcriptional coactivation through YWHAZ-mediated nuclear export. Ubiquitinated at Lys-46; leading to proteasomal degradation. Deubiquitinated and stabilized by UCHL1 at Lys-46; leading to inhibition of osteoclastogenesis.

It localises to the cytoplasm. The protein resides in the nucleus. The protein localises to the cell membrane. Its subcellular location is the cell junction. It is found in the tight junction. Its function is as follows. Transcriptional coactivator which acts as a downstream regulatory target in the Hippo signaling pathway that plays a pivotal role in organ size control and tumor suppression by restricting proliferation and promoting apoptosis. The core of this pathway is composed of a kinase cascade wherein STK3/MST2 and STK4/MST1, in complex with its regulatory protein SAV1, phosphorylates and activates LATS1/2 in complex with its regulatory protein MOB1, which in turn phosphorylates and inactivates YAP1 oncoprotein and WWTR1/TAZ. WWTR1 enhances PAX8 and NKX2-1/TTF1-dependent gene activation. In conjunction with YAP1, involved in the regulation of TGFB1-dependent SMAD2 and SMAD3 nuclear accumulation. Plays a key role in coupling SMADs to the transcriptional machinery such as the mediator complex. Regulates embryonic stem-cell self-renewal, promotes cell proliferation and epithelial-mesenchymal transition. The sequence is that of WW domain-containing transcription regulator protein 1 from Canis lupus familiaris (Dog).